The chain runs to 641 residues: ATP-dependent zinc metalloprotease FtsH 2 (641 aa).

At 1–100 (MLAYYVSVNQ…IDVKVIHNFW (100 aa)) the chain is on the periplasmic side. The chain crosses the membrane as a helical span at residues 101–121 (GQAFLSVLPFLLFILALYFLF). At 122–641 (RQQIRMAGRG…LLPGLEGAPA (520 aa)) the chain is on the cytoplasmic side. 193 to 200 (GPPGTGKT) serves as a coordination point for ATP. His-415 lines the Zn(2+) pocket. Glu-416 is a catalytic residue. Positions 419 and 491 each coordinate Zn(2+). The tract at residues 593–641 (KTGKMTNPPSKNSSPVSNGGEASSTKSPARQEETTKDGGLLPGLEGAPA) is disordered. Composition is skewed to low complexity over residues 599-610 (NPPSKNSSPVSN) and 630-641 (GGLLPGLEGAPA).

In the central section; belongs to the AAA ATPase family. This sequence in the C-terminal section; belongs to the peptidase M41 family. In terms of assembly, homohexamer. The cofactor is Zn(2+).

It is found in the cell inner membrane. In terms of biological role, acts as a processive, ATP-dependent zinc metallopeptidase for both cytoplasmic and membrane proteins. Plays a role in the quality control of integral membrane proteins. In Methylacidiphilum infernorum (isolate V4) (Methylokorus infernorum (strain V4)), this protein is ATP-dependent zinc metalloprotease FtsH 2.